The following is a 145-amino-acid chain: uncharacterized protein (145 aa).

A run of 4 helical transmembrane segments spans residues 1 to 21 (MELF…YFLI), 28 to 48 (TVLI…MGAL), 54 to 74 (SMTS…AYVM), and 96 to 116 (FFLI…IPSA).

Belongs to the DcuC/DcuD transporter (TC 2.A.61) family.

It localises to the cell membrane. This is an uncharacterized protein from Haemophilus influenzae (strain ATCC 51907 / DSM 11121 / KW20 / Rd).